A 711-amino-acid chain; its full sequence is Long-chain-fatty-acid--CoA ligase 4 (711 aa).

A helical; Signal-anchor for type III membrane protein transmembrane segment spans residues 8–28 (LTIILLPVHLLITIYSALIFI). Over 29 to 711 (PWYFLTNAKK…KDIERMYGGK (683 aa)) the chain is Cytoplasmic. The residue at position 447 (serine 447) is a Phosphoserine.

Belongs to the ATP-dependent AMP-binding enzyme family. It depends on Mg(2+) as a cofactor. As to expression, abundant in steroidogenic tissues, also found in the kidney, brain and liver.

The protein resides in the mitochondrion outer membrane. It is found in the peroxisome membrane. It localises to the microsome membrane. The protein localises to the endoplasmic reticulum membrane. Its subcellular location is the cell membrane. It carries out the reaction a long-chain fatty acid + ATP + CoA = a long-chain fatty acyl-CoA + AMP + diphosphate. The catalysed reaction is (5Z,8Z,11Z,14Z)-eicosatetraenoate + ATP + CoA = (5Z,8Z,11Z,14Z)-eicosatetraenoyl-CoA + AMP + diphosphate. The enzyme catalyses 15-hydroxy-(5Z,8Z,11Z,13E)-eicosatetraenoate + ATP + CoA = 15-hydroxy-(5Z,8Z,11Z,13E)-eicosatetraenoyl-CoA + AMP + diphosphate. It catalyses the reaction 12-hydroxy-(5Z,8Z,10E,14Z)-eicosatetraenoate + ATP + CoA = 12-hydroxy-(5Z,8Z,10E,14Z)-eicosatetraenoyl-CoA + AMP + diphosphate. It carries out the reaction 5-hydroxy-(6E,8Z,11Z,14Z)-eicosatetraenoate + ATP + CoA = 5-hydroxy-(6E,8Z,11Z,14Z)-eicosatetraenoyl-CoA + AMP + diphosphate. The catalysed reaction is 5,6-epoxy-(8Z,11Z,14Z)-eicosatrienoate + ATP + CoA = 5,6-epoxy-(8Z,11Z,14Z)-eicosatrienoyl-CoA + AMP + diphosphate. The enzyme catalyses 14,15-epoxy-(5Z,8Z,11Z)-eicosatrienoate + ATP + CoA = 14,15-epoxy-(5Z,8Z,11Z)-eicosatrienoyl-CoA + AMP + diphosphate. It catalyses the reaction 11,12-epoxy-(5Z,8Z,14Z)-eicosatrienoate + ATP + CoA = 11,12-epoxy-(5Z,8Z,14Z)-eicosatrienoyl-CoA + AMP + diphosphate. It carries out the reaction 8,9-epoxy-(5Z,11Z,14Z)-eicosatrienoate + ATP + CoA = 8,9-epoxy-(5Z,11Z,14Z)-eicosatrienoyl-CoA + AMP + diphosphate. The catalysed reaction is hexadecanoate + ATP + CoA = hexadecanoyl-CoA + AMP + diphosphate. The enzyme catalyses (E)-hexadec-2-enoate + ATP + CoA = (2E)-hexadecenoyl-CoA + AMP + diphosphate. With respect to regulation, both triacsin C and rosiglitazone inhibit arachidonoyl-CoA ligase activity. Catalyzes the conversion of long-chain fatty acids to their active form acyl-CoA for both synthesis of cellular lipids, and degradation via beta-oxidation. Preferentially activates arachidonate and eicosapentaenoate as substrates. Preferentially activates 8,9-EET &gt; 14,15-EET &gt; 5,6-EET &gt; 11,12-EET. Modulates glucose-stimulated insulin secretion by regulating the levels of unesterified EETs. Modulates prostaglandin E2 secretion. In Mus musculus (Mouse), this protein is Long-chain-fatty-acid--CoA ligase 4 (Acsl4).